The primary structure comprises 208 residues: Uridine kinase (208 aa).

Position 11 to 18 (11 to 18 (GGTGSGKS)) interacts with ATP.

The protein belongs to the uridine kinase family.

The protein localises to the cytoplasm. The catalysed reaction is uridine + ATP = UMP + ADP + H(+). It catalyses the reaction cytidine + ATP = CMP + ADP + H(+). It participates in pyrimidine metabolism; CTP biosynthesis via salvage pathway; CTP from cytidine: step 1/3. It functions in the pathway pyrimidine metabolism; UMP biosynthesis via salvage pathway; UMP from uridine: step 1/1. The chain is Uridine kinase from Clostridium novyi (strain NT).